We begin with the raw amino-acid sequence, 278 residues long: S-formylglutathione hydrolase YeiG (278 aa).

Residues Ser145, Asp223, and His256 each act as charge relay system in the active site.

The protein belongs to the esterase D family.

It catalyses the reaction S-formylglutathione + H2O = formate + glutathione + H(+). Its function is as follows. Serine hydrolase involved in the detoxification of formaldehyde. Hydrolyzes S-formylglutathione to glutathione and formate. The polypeptide is S-formylglutathione hydrolase YeiG (yeiG) (Escherichia coli O157:H7).